Consider the following 418-residue polypeptide: Phosphoglycerate kinase (418 aa).

Positions 23, 24, 25, 26, 39, 40, 63, 64, 66, 67, 122, 123, 170, and 171 each coordinate (2R)-3-phosphoglycerate. Glycine 214 contributes to the ADP binding site. Glycine 214 serves as a coordination point for CDP. AMP-binding residues include alanine 215 and lysine 216. Alanine 215 lines the ATP pocket. Alanine 215 contacts Mg(2+). CDP is bound at residue aspartate 219. Aspartate 219 serves as a coordination point for Mg(2+). Lysine 220 lines the AMP pocket. Position 220 (lysine 220) interacts with ATP. An ADP-binding site is contributed by glycine 238. Glycine 238 provides a ligand contact to CDP. Positions 239 and 313 each coordinate AMP. Residues glycine 239 and glycine 313 each coordinate ATP. CDP-binding residues include glycine 338, alanine 340, and phenylalanine 343. Phenylalanine 343 lines the ADP pocket. Glutamate 344 is a binding site for AMP. ATP is bound by residues glutamate 344, aspartate 375, and threonine 376. Mg(2+) is bound at residue aspartate 375.

Belongs to the phosphoglycerate kinase family. Monomer. Requires Mg(2+) as cofactor.

The protein localises to the cytoplasm. Its subcellular location is the mitochondrion. The enzyme catalyses (2R)-3-phosphoglycerate + ATP = (2R)-3-phospho-glyceroyl phosphate + ADP. It functions in the pathway carbohydrate degradation; glycolysis; pyruvate from D-glyceraldehyde 3-phosphate: step 2/5. Functionally, catalyzes one of the two ATP producing reactions in the glycolytic pathway via the reversible conversion of 1,3-diphosphoglycerate to 3-phosphoglycerate. Both L- and D- forms of purine and pyrimidine nucleotides can be used as substrates, but the activity is much lower on pyrimidines. Negatively regulates the biosynthesis of acetyl-CoA from pyruvate in the mitochondrion. The polypeptide is Phosphoglycerate kinase (pgk-1) (Neurospora crassa (strain ATCC 24698 / 74-OR23-1A / CBS 708.71 / DSM 1257 / FGSC 987)).